The primary structure comprises 172 residues: Single-stranded DNA-binding protein A (172 aa).

The SSB domain maps to 1-104 (MLNRVVLVGR…VQAESVQFLE (104 aa)). Tyrosine 82 bears the Phosphotyrosine mark. Positions 103-172 (LEPKNGGGSG…IDISDDDLPF (70 aa)) are disordered. A compositionally biased stretch (gly residues) spans 107–131 (NGGGSGSGGYNEGNSGGGQYFGGGQ). Over residues 132–149 (NDNPFGGNQNNQRRNQGN) the composition is skewed to low complexity. Positions 167-172 (DDDLPF) match the Important for interaction with partner proteins motif.

In terms of assembly, homotetramer. Interacts with proteins involved in DNA metabolism such as PriA, RecQ, RecG, RecS, DnaE, RarA, RecJ, RecO, SbcC, RecD2 (formerly YrrC), XseA and Ung. Interacts with RecQ via its 10 C-terminal residues. Interacts with RecD2. Post-translationally, phosphorylated by YwqD, which increases ssDNA affinity; dephosphorylated by YwqE.

The protein localises to the cytoplasm. It is found in the nucleoid. Plays an important role in DNA replication, recombination and repair. Binds to single-stranded (ss)DNA and to an array of partner proteins to recruit them to their sites of action during DNA metabolism. Associates with oriC, this requires DnaA. SsbA binding to ssDNA prevents DnaB and DnaD individually from binding to DNA. Has a 20-fold higher affinity for ssDNA than SsbB; SsbA and DprA activate the homologous DNA strand exchange function of RecA-ATP. Enhances the activity of 3'-5' DNA helicase RecQ. In Bacillus subtilis (strain 168), this protein is Single-stranded DNA-binding protein A (ssbA).